The sequence spans 480 residues: Glutamate--tRNA ligase (480 aa).

The 'HIGH' region motif lies at 9–19 (PSPTGNLHIGT). Positions 247–251 (KLSKR) match the 'KMSKS' region motif. K250 lines the ATP pocket.

Belongs to the class-I aminoacyl-tRNA synthetase family. Glutamate--tRNA ligase type 1 subfamily. As to quaternary structure, monomer.

The protein resides in the cytoplasm. It catalyses the reaction tRNA(Glu) + L-glutamate + ATP = L-glutamyl-tRNA(Glu) + AMP + diphosphate. In terms of biological role, catalyzes the attachment of glutamate to tRNA(Glu) in a two-step reaction: glutamate is first activated by ATP to form Glu-AMP and then transferred to the acceptor end of tRNA(Glu). This chain is Glutamate--tRNA ligase, found in Nostoc sp. (strain PCC 7120 / SAG 25.82 / UTEX 2576).